A 137-amino-acid chain; its full sequence is Large ribosomal subunit protein uL16 (137 aa).

This sequence belongs to the universal ribosomal protein uL16 family. As to quaternary structure, part of the 50S ribosomal subunit.

Its function is as follows. Binds 23S rRNA and is also seen to make contacts with the A and possibly P site tRNAs. This Psychrobacter sp. (strain PRwf-1) protein is Large ribosomal subunit protein uL16.